A 448-amino-acid polypeptide reads, in one-letter code: Adenylosuccinate synthetase (448 aa).

Residues 36–42 (GDEGKGK) and 64–66 (GHT) each bind GTP. Asp-37 (proton acceptor) is an active-site residue. Positions 37 and 64 each coordinate Mg(2+). IMP contacts are provided by residues 37 to 40 (DEGK), 62 to 65 (NAGH), Thr-154, Arg-168, Asn-246, Thr-261, and Arg-325. His-65 serves as the catalytic Proton donor. Residue 321–327 (VTTKRKR) coordinates substrate. Residues Arg-327, 353 to 355 (KLD), and 436 to 438 (GVG) contribute to the GTP site.

It belongs to the adenylosuccinate synthetase family. As to quaternary structure, homodimer. It depends on Mg(2+) as a cofactor.

The protein resides in the cytoplasm. The catalysed reaction is IMP + L-aspartate + GTP = N(6)-(1,2-dicarboxyethyl)-AMP + GDP + phosphate + 2 H(+). The protein operates within purine metabolism; AMP biosynthesis via de novo pathway; AMP from IMP: step 1/2. Plays an important role in the de novo pathway and in the salvage pathway of purine nucleotide biosynthesis. Catalyzes the first committed step in the biosynthesis of AMP from IMP. The protein is Adenylosuccinate synthetase of Drosophila ananassae (Fruit fly).